The following is a 479-amino-acid chain: Glycogen synthase (479 aa).

K15 is a binding site for ADP-alpha-D-glucose.

This sequence belongs to the glycosyltransferase 1 family. Bacterial/plant glycogen synthase subfamily.

It carries out the reaction [(1-&gt;4)-alpha-D-glucosyl](n) + ADP-alpha-D-glucose = [(1-&gt;4)-alpha-D-glucosyl](n+1) + ADP + H(+). The protein operates within glycan biosynthesis; glycogen biosynthesis. Its function is as follows. Synthesizes alpha-1,4-glucan chains using ADP-glucose. This Pectobacterium atrosepticum (strain SCRI 1043 / ATCC BAA-672) (Erwinia carotovora subsp. atroseptica) protein is Glycogen synthase.